The chain runs to 456 residues: Enolase (456 aa).

Q167 lines the (2R)-2-phosphoglycerate pocket. The Proton donor role is filled by E209. Mg(2+)-binding residues include D250, E312, and D339. Residues K364, R393, S394, and K415 each coordinate (2R)-2-phosphoglycerate. K364 functions as the Proton acceptor in the catalytic mechanism.

It belongs to the enolase family. Requires Mg(2+) as cofactor.

The protein resides in the cytoplasm. It localises to the secreted. It is found in the cell surface. It carries out the reaction (2R)-2-phosphoglycerate = phosphoenolpyruvate + H2O. The protein operates within carbohydrate degradation; glycolysis; pyruvate from D-glyceraldehyde 3-phosphate: step 4/5. Functionally, catalyzes the reversible conversion of 2-phosphoglycerate (2-PG) into phosphoenolpyruvate (PEP). It is essential for the degradation of carbohydrates via glycolysis. The chain is Enolase from Mycoplasmopsis pulmonis (strain UAB CTIP) (Mycoplasma pulmonis).